The following is a 451-amino-acid chain: Tubulin gamma-1 chain (451 aa).

At Ser-131 the chain carries Phosphoserine; by BRSK1. 142–148 (AGGTGSG) is a GTP binding site.

The protein belongs to the tubulin family. In terms of assembly, component of the gamma-tubulin ring complex (gTuRC) consisting of TUBGCP2, TUBGCP3, TUBGCP4, TUBGCP5 and TUBGCP6 and gamma-tubulin TUBG1 or TUBG2. TUBGCP2, TUBGCP3, TUBGCP4, TUBGCP5 and TUBGCP6 assemble in a 5:5:2:1:1 stoichiometry; each is associated with a gamma-tubulin, thereby arranging 14 gamma-tubulins in a helical manner. Gamma-tubulin at the first position is blocked by TUBGCP3 at the last position, allowing 13 protafilaments to grow into a microtubule. The gTuRC (via TUBGCP3 and TUBGCP6) interacts with ACTB and MZT1; the interactions form a luminal bridge that stabilizes the initial structure during complex assembly. The gTuRC (via TUBGCP2) interacts with MZT2A/MZT2B and CDK5RAP2 (via CM1 motif); the interactions play a role in gTuRC activation. Interacts with alpha-beta tubulin heterodimers; the interaction allows microtubules to nucleate from the gTuRC. Interacts with B9D2. Interacts with CDK5RAP2; the interaction is leading to centrosomal localization of TUBG1 and CDK5RAP2. Interacts with CIMAP3. Interacts with SAS6 and NUP62 at the centrosome. Interacts with EML3 (phosphorylated at 'Thr-881') and HAUS8. Interacts with DNM2; this interaction may participate in centrosome cohesion. Interacts with CCDC66. Post-translationally, phosphorylation at Ser-131 by BRSK1 regulates centrosome duplication, possibly by mediating relocation of gamma-tubulin and its associated proteins from the cytoplasm to the centrosome.

The protein resides in the cytoplasm. It localises to the cytoskeleton. It is found in the microtubule organizing center. The protein localises to the centrosome. Its subcellular location is the spindle. In terms of biological role, tubulin is the major constituent of microtubules, protein filaments consisting of alpha- and beta-tubulin heterodimers. Gamma-tubulin is a key component of the gamma-tubulin ring complex (gTuRC) which mediates microtubule nucleation. The gTuRC regulates the minus-end nucleation of alpha-beta tubulin heterodimers that grow into microtubule protafilaments, a critical step in centrosome duplication and spindle formation. This is Tubulin gamma-1 chain from Canis lupus familiaris (Dog).